Reading from the N-terminus, the 175-residue chain is Protein FLOWERING LOCUS T (175 aa).

This sequence belongs to the phosphatidylethanolamine-binding protein family. Interacts with FD/BZIP14 and FDP/BZIP27. Interacts with FTIP1/MCTP1 in phloem companion cells. Interacts with NAKR1. In terms of tissue distribution, mostly localized in leaves vasculature.

It localises to the cytoplasm. The protein localises to the nucleus. Its subcellular location is the endoplasmic reticulum. Functionally, component of the mobile flower-promoting signal (floral stimulus or florigen). Promotes the transition from vegetative growth to flowering. Required for 'SEPALLATA3' (SEP3) and 'FRUITFULL' (FUL) accumulation in mature rosette leaves. Seems to acts in parallel with 'LEAFY' to induce flowering by regulating 'APETALA1'. Translated in leaves and then transported to the shoot apical meristem where it activates the transcription of several floral meristem identity genes. May play a role in both the autonomous and the long-day flowering pathways. This is Protein FLOWERING LOCUS T from Arabidopsis thaliana (Mouse-ear cress).